Here is a 100-residue protein sequence, read N- to C-terminus: Small ribosomal subunit protein uS14c (100 aa).

This sequence belongs to the universal ribosomal protein uS14 family. Part of the 30S ribosomal subunit.

The protein localises to the plastid. The protein resides in the chloroplast. Its function is as follows. Binds 16S rRNA, required for the assembly of 30S particles. The protein is Small ribosomal subunit protein uS14c of Coffea arabica (Arabian coffee).